The following is a 493-amino-acid chain: Tripartite motif-containing protein 5 (493 aa).

At Ala-2 the chain carries N-acetylalanine. An RING-type zinc finger spans residues Cys-15–Arg-59. Phosphoserine is present on Ser-86. Residues Gln-90–Glu-132 form a B box-type zinc finger. Residues Cys-95, His-98, Cys-117, and His-123 each coordinate Zn(2+). The stretch at Leu-130–Gly-241 forms a coiled coil. The segment at Phe-185 to Asn-198 is required for interaction with GABARAP and for autophagy. Residues Leu-281–Ser-493 enclose the B30.2/SPRY domain.

Belongs to the TRIM/RBCC family. As to quaternary structure, can form homodimers and homotrimers. In addition to lower-order dimerization, also exhibits a higher-order multimerization and both low- and high-order multimerizations are essential for its restriction activity. Isoform Delta interacts with BTBD1 and BTBD2. Interacts with PSMC4, PSMC5, PSMD7 and HSPA8/HSC70. Interacts (via B30.2/SPRY domain) with HSPA1A/B. Interacts with PSMC2, MAP3K7/TAK1, TAB2 and TAB3. Interacts with SQSTM1. Interacts with TRIM6 and TRIM34. Interacts with ULK1 (phosphorylated form), GABARAP, GABARAPL1, GABARAPL2, MAP1LC3A, MAP1LC3C and BECN1. In terms of processing, degraded in a proteasome-independent fashion in the absence of viral infection but in a proteasome-dependent fashion following exposure to restriction sensitive virus. Post-translationally, autoubiquitinated in a RING finger- and UBE2D2-dependent manner. Monoubiquitinated by TRIM21. Deubiquitinated by Yersinia YopJ. Ubiquitination may not lead to proteasomal degradation.

It localises to the cytoplasm. The protein resides in the nucleus. The catalysed reaction is S-ubiquitinyl-[E2 ubiquitin-conjugating enzyme]-L-cysteine + [acceptor protein]-L-lysine = [E2 ubiquitin-conjugating enzyme]-L-cysteine + N(6)-ubiquitinyl-[acceptor protein]-L-lysine.. It participates in protein modification; protein ubiquitination. In terms of biological role, capsid-specific restriction factor that prevents infection from non-host-adapted retroviruses. Blocks viral replication early in the life cycle, after viral entry but before reverse transcription. In addition to acting as a capsid-specific restriction factor, also acts as a pattern recognition receptor that activates innate immune signaling in response to the retroviral capsid lattice. Binding to the viral capsid triggers its E3 ubiquitin ligase activity, and in concert with the heterodimeric ubiquitin conjugating enzyme complex UBE2V1-UBE2N (also known as UBC13-UEV1A complex) generates 'Lys-63'-linked polyubiquitin chains, which in turn are catalysts in the autophosphorylation of the MAP3K7/TAK1 complex (includes TAK1, TAB2, and TAB3). Activation of the MAP3K7/TAK1 complex by autophosphorylation results in the induction and expression of NF-kappa-B and MAPK-responsive inflammatory genes, thereby leading to an innate immune response in the infected cell. Restricts infection by N-tropic murine leukemia virus (N-MLV), equine infectious anemia virus (EIAV), simian immunodeficiency virus of macaques (SIVmac), feline immunodeficiency virus (FIV), and bovine immunodeficiency virus (BIV). Plays a role in regulating autophagy through activation of autophagy regulator BECN1 by causing its dissociation from its inhibitors BCL2 and TAB2. Also plays a role in autophagy by acting as a selective autophagy receptor which recognizes and targets HIV-1 capsid protein p24 for autophagic destruction. The polypeptide is Tripartite motif-containing protein 5 (TRIM5) (Homo sapiens (Human)).